The primary structure comprises 395 residues: Chaperone protein DnaJ (395 aa).

In terms of domain architecture, J spans 5 to 70 (DFYEVLGVDK…NKRAAYDRMG (66 aa)). The CR-type zinc finger occupies 145 to 223 (GKDETIKVPT…CDGVGRVRKT (79 aa)). Residues Cys158, Cys161, Cys175, Cys178, Cys197, Cys200, Cys211, and Cys214 each contribute to the Zn(2+) site. CXXCXGXG motif repeat units follow at residues 158–165 (CERCDGQG), 175–182 (CGTCQGAG), 197–204 (CPQCGGRG), and 211–218 (CNDCDGVG).

It belongs to the DnaJ family. Homodimer. Zn(2+) serves as cofactor.

It localises to the cytoplasm. In terms of biological role, participates actively in the response to hyperosmotic and heat shock by preventing the aggregation of stress-denatured proteins and by disaggregating proteins, also in an autonomous, DnaK-independent fashion. Unfolded proteins bind initially to DnaJ; upon interaction with the DnaJ-bound protein, DnaK hydrolyzes its bound ATP, resulting in the formation of a stable complex. GrpE releases ADP from DnaK; ATP binding to DnaK triggers the release of the substrate protein, thus completing the reaction cycle. Several rounds of ATP-dependent interactions between DnaJ, DnaK and GrpE are required for fully efficient folding. Also involved, together with DnaK and GrpE, in the DNA replication of plasmids through activation of initiation proteins. The chain is Chaperone protein DnaJ from Maricaulis maris (strain MCS10) (Caulobacter maris).